A 93-amino-acid chain; its full sequence is Small ribosomal subunit protein uS19 (93 aa).

Residues 72–93 (GEFSPTRTYRGHNKKDKKMQKK) are disordered. Residues 80–93 (YRGHNKKDKKMQKK) are compositionally biased toward basic residues.

The protein belongs to the universal ribosomal protein uS19 family.

Functionally, protein S19 forms a complex with S13 that binds strongly to the 16S ribosomal RNA. The chain is Small ribosomal subunit protein uS19 from Aster yellows witches'-broom phytoplasma (strain AYWB).